A 600-amino-acid chain; its full sequence is MRVTTSFPLGTLRDTPSEAEIISHQLLLKAGYIRRVNSGIYAYMPLMLRVVEKISAIIEKELNSIGCTKLLLPQLHPADLWKKSERWEGYTAGEGIMFNLKDRQGKEFGLAPTHEEVITSIASETINSYKQLPQCFYQIQTKFRDEIRPRFGLMRSREFIMKDGYSFHSSENDLASFYEKVGNAYENIFESCGLQTVGVDADSGAIGGASSKEFMVTADAGEDSILFTQSGSYAANIEKAVSLPSQPIPLKDNIAEWLETPNQKTIQEVCDNNNLDPSQIIKVVILLAQFENEFNAPILACVRGDQHINEVKLFNLINKLHHFNLLNLKKIEDKNTIEKNLVDLPLGFIGPDLDNKTIKASSNWEKKWTRIIDHSASDLSKFISGGNKVNFHKVFQEFSFNSKNYLIGDIRNAKKGDKISIDDDEELKEKKGIEIGHIFQLGQKYSEKLNAKFSDKDGQLKNLWMGCYGIGVTRIAQAAIEQNHDQKGICWPIQISPFEVIIIPTNLKDPIQSDLTEQIYNNFLINKIDVLLDDRNDRAGVKFKDAELIGIPFQVIIGRDSINKEVELFCRTNNTKIKISTDKLLETFISESEIMYNKKS.

Belongs to the class-II aminoacyl-tRNA synthetase family. ProS type 1 subfamily. Homodimer.

The protein resides in the cytoplasm. It carries out the reaction tRNA(Pro) + L-proline + ATP = L-prolyl-tRNA(Pro) + AMP + diphosphate. In terms of biological role, catalyzes the attachment of proline to tRNA(Pro) in a two-step reaction: proline is first activated by ATP to form Pro-AMP and then transferred to the acceptor end of tRNA(Pro). As ProRS can inadvertently accommodate and process non-cognate amino acids such as alanine and cysteine, to avoid such errors it has two additional distinct editing activities against alanine. One activity is designated as 'pretransfer' editing and involves the tRNA(Pro)-independent hydrolysis of activated Ala-AMP. The other activity is designated 'posttransfer' editing and involves deacylation of mischarged Ala-tRNA(Pro). The misacylated Cys-tRNA(Pro) is not edited by ProRS. This Prochlorococcus marinus (strain MIT 9301) protein is Proline--tRNA ligase.